We begin with the raw amino-acid sequence, 327 residues long: Ribosomal RNA small subunit methyltransferase H (327 aa).

Residues 36 to 38 (GGH), Asp-61, Phe-88, Asp-114, and Gln-121 each bind S-adenosyl-L-methionine.

Belongs to the methyltransferase superfamily. RsmH family.

It localises to the cytoplasm. The catalysed reaction is cytidine(1402) in 16S rRNA + S-adenosyl-L-methionine = N(4)-methylcytidine(1402) in 16S rRNA + S-adenosyl-L-homocysteine + H(+). Specifically methylates the N4 position of cytidine in position 1402 (C1402) of 16S rRNA. In Chlorobium luteolum (strain DSM 273 / BCRC 81028 / 2530) (Pelodictyon luteolum), this protein is Ribosomal RNA small subunit methyltransferase H.